The following is a 463-amino-acid chain: Polyadenylate-binding protein-interacting protein 1 (463 aa).

A disordered region spans residues 1 to 86; the sequence is MSDGFERAPG…HKRTSPAAQL (86 aa). The MIF4G domain occupies 145–362; it reads TEYVQDFLNH…LKLVELRSSN (218 aa). The interval 420-442 is disordered; the sequence is RDYDENGTDGGDSYFEDDDDNEM. Over residues 433–442 the composition is skewed to acidic residues; it reads YFEDDDDNEM.

Interacts with the RRM1-RRM2 and C-terminal regions of epabp.

Its subcellular location is the cytoplasm. In terms of biological role, acts as a coactivator in the regulation of translation initiation of poly(A)-containing mRNAs. The sequence is that of Polyadenylate-binding protein-interacting protein 1 from Xenopus laevis (African clawed frog).